The chain runs to 180 residues: Type IV major pilin protein PilE1 (180 aa).

Positions 1–7 are excised as a propeptide; it reads MNTLQKG. Phe-8 is subject to N-methylphenylalanine. A helical transmembrane segment spans residues 8-28; that stretch reads FTLIELMIVIAIVGILAAVAL. O-linked (GlcNAc...) serine glycosylation is present at Ser-70. Cys-128 and Cys-160 are oxidised to a cystine.

The protein belongs to the N-Me-Phe pilin family. The pili are polar flexible filaments of about 5.4 nanometers diameter and 2.5 micrometers average length; they consist of only a single polypeptide chain arranged in a helical configuration of five subunits per turn in the assembled pilus.

It localises to the fimbrium. It is found in the membrane. Major component of the type IV pilus (T4P) that plays a role in cellular adherence, microcolony formation, resistance to neutrophil mediated killing, twitching motility as well as transformation. Mediates the attachment and the formation of bacterial microcolonies on host epithelial cells. Mechanistically, pili retractation induces host NF-kappa-B activation in infected cells, which is temporally associated with the formation of gonococcal microcolonies. In Neisseria gonorrhoeae, this protein is Type IV major pilin protein PilE1 (pilE1).